The sequence spans 572 residues: Urease subunit alpha (572 aa).

The Urease domain occupies 132–572; the sequence is GGFDSHIHFI…LPMAQRYFMY (441 aa). 3 residues coordinate Ni(2+): histidine 137, histidine 139, and lysine 220. Lysine 220 is modified (N6-carboxylysine). Histidine 222 lines the substrate pocket. Histidine 249 and histidine 275 together coordinate Ni(2+). The active-site Proton donor is the histidine 323. Aspartate 363 contributes to the Ni(2+) binding site.

The protein belongs to the metallo-dependent hydrolases superfamily. Urease alpha subunit family. In terms of assembly, heterotrimer of UreA (gamma), UreB (beta) and UreC (alpha) subunits. Three heterotrimers associate to form the active enzyme. The cofactor is Ni cation. In terms of processing, carboxylation allows a single lysine to coordinate two nickel ions.

The protein resides in the cytoplasm. The catalysed reaction is urea + 2 H2O + H(+) = hydrogencarbonate + 2 NH4(+). The protein operates within nitrogen metabolism; urea degradation; CO(2) and NH(3) from urea (urease route): step 1/1. The protein is Urease subunit alpha of Bradyrhizobium diazoefficiens (strain JCM 10833 / BCRC 13528 / IAM 13628 / NBRC 14792 / USDA 110).